A 370-amino-acid polypeptide reads, in one-letter code: Actin-related protein 2/3 complex subunit 1A (370 aa).

WD repeat units lie at residues 6–45, 50–89, 140–179, 202–241, 244–284, and 322–365; these read FLLE…WVKA, EHNG…WKPT, PIRS…VDEK, GTGG…QVST, TEFL…TFVS, and LHQN…SSIQ.

It belongs to the WD repeat ARPC1 family. As to quaternary structure, probable component of the Arp2/3 complex in which it may replace ARPC1B. In addition to its role in the cytoplasmic cytoskeleton, the Arp2/3 complex also promotes actin polymerization in the nucleus, thereby regulating gene transcription and repair of damaged DNA.

The protein resides in the cytoplasm. The protein localises to the cytoskeleton. Its subcellular location is the nucleus. Probably functions as a component of the Arp2/3 complex which is involved in regulation of actin polymerization and together with an activating nucleation-promoting factor (NPF) mediates the formation of branched actin networks. This chain is Actin-related protein 2/3 complex subunit 1A (ARPC1A), found in Homo sapiens (Human).